Consider the following 388-residue polypeptide: Ribonucleoside-diphosphate reductase subunit beta (388 aa).

Fe cation-binding residues include Asp84, Glu115, and His118. Tyr122 is an active-site residue. Fe cation-binding residues include Glu212, Glu247, and His250.

Belongs to the ribonucleoside diphosphate reductase small chain family. Heterodimer of a large and a small subunit. Fe cation is required as a cofactor.

The enzyme catalyses a 2'-deoxyribonucleoside 5'-diphosphate + [thioredoxin]-disulfide + H2O = a ribonucleoside 5'-diphosphate + [thioredoxin]-dithiol. Provides the precursors necessary for DNA synthesis. Catalyzes the biosynthesis of deoxyribonucleotides from the corresponding ribonucleotides. The chain is Ribonucleoside-diphosphate reductase subunit beta (NRDB) from Escherichia coli (Bacteriophage T4).